The sequence spans 513 residues: Protein phosphatase 1H (513 aa).

S7 bears the Phosphoserine mark. The 430-residue stretch at 77-506 (ATGYAEVINA…DDISVYVIPL (430 aa)) folds into the PPM-type phosphatase domain. Residues 110–133 (ITSTPNRNSKRRSSLPNGEGLQLK) form a disordered region. Phosphothreonine is present on T113. Residues S123 and S210 each carry the phosphoserine modification. R212 bears the Omega-N-methylarginine mark. Phosphoserine is present on S220. T223 is subject to Phosphothreonine. A Phosphoserine modification is found at S421.

The protein belongs to the PP2C family.

It is found in the nucleus. The protein localises to the cytoplasm. The enzyme catalyses O-phospho-L-seryl-[protein] + H2O = L-seryl-[protein] + phosphate. It catalyses the reaction O-phospho-L-threonyl-[protein] + H2O = L-threonyl-[protein] + phosphate. Its function is as follows. Dephosphorylates CDKN1B at 'Thr-187', thus removing a signal for proteasomal degradation. The polypeptide is Protein phosphatase 1H (Ppm1h) (Rattus norvegicus (Rat)).